A 129-amino-acid polypeptide reads, in one-letter code: MANLNQIQKEVSEILSDQKSMKSDIKAILEMLGSQNPIKESLEAVAAKIVNDLTKLINDCPCNKEILEALGNQPKEQLIEQPKEKGKGLNLGKYSYPNYGVGNEELGSSGNPKALTWPFKAPAGWPNQF.

2 coiled-coil regions span residues 1-31 (MANL…ILEM) and 38-59 (IKES…LIND). The capsid binding stretch occupies residues 122 to 129 (PAGWPNQF).

The protein belongs to the caulimovirus ORF III family. As to quaternary structure, homotetramer, through coiled-coil domain. Homotrimer when interacts with icosehadral capsid. Interacts with capsid protein, and with Movement protein.

It localises to the virion. The protein localises to the host cell junction. Its subcellular location is the host plasmodesma. Plays a role in virus cell-to-cell and plant-to-plant transmission. Interacts with virion icosahedral capsid and movement protein, thereby facilitating virion cell-to-cell transmission through plasmodesmata opened by viral movement protein. Also interacts with aphid transmission factor, attaching the virion to aphid stylet when the animal feeds on an virus infected plant. Aphid saliva may later detach the virion, inducing release of infectious particles when the animal feeds on a new plant. The chain is Virion-associated protein from Arabidopsis thaliana (Mouse-ear cress).